The primary structure comprises 119 residues: Large ribosomal subunit protein bL20 (119 aa).

Belongs to the bacterial ribosomal protein bL20 family.

In terms of biological role, binds directly to 23S ribosomal RNA and is necessary for the in vitro assembly process of the 50S ribosomal subunit. It is not involved in the protein synthesizing functions of that subunit. This is Large ribosomal subunit protein bL20 from Saccharophagus degradans (strain 2-40 / ATCC 43961 / DSM 17024).